A 510-amino-acid chain; its full sequence is 2,3-bisphosphoglycerate-independent phosphoglycerate mutase (510 aa).

Mn(2+) is bound by residues D12 and S62. S62 functions as the Phosphoserine intermediate in the catalytic mechanism. Substrate is bound by residues H123, 153–154 (RD), R185, R191, 261–264 (RPDR), and K336. 5 residues coordinate Mn(2+): D403, H407, D444, H445, and H462.

This sequence belongs to the BPG-independent phosphoglycerate mutase family. As to quaternary structure, monomer. Mn(2+) is required as a cofactor.

The enzyme catalyses (2R)-2-phosphoglycerate = (2R)-3-phosphoglycerate. The protein operates within carbohydrate degradation; glycolysis; pyruvate from D-glyceraldehyde 3-phosphate: step 3/5. Functionally, essential for rapid growth and for sporulation. Catalyzes the interconversion of 2-phosphoglycerate and 3-phosphoglycerate. This is 2,3-bisphosphoglycerate-independent phosphoglycerate mutase from Priestia megaterium (strain ATCC 12872 / QMB1551) (Bacillus megaterium).